Reading from the N-terminus, the 281-residue chain is Transcription factor E2F6 (281 aa).

Lys-9 participates in a covalent cross-link: Glycyl lysine isopeptide (Lys-Gly) (interchain with G-Cter in SUMO2). The DNA-binding element occupies 50–129 (YVSMRKALKV…SKNHIRWIGS (80 aa)). The DEF box signature appears at 95–129 (KLGVRKRRVYDITNVLDGIDLVEKKSKNHIRWIGS). A dimerization region spans residues 130-222 (DLSNFGAVPQ…PAPREDSITV (93 aa)). Positions 143–164 (LQEELSDLSAMEDALDELIKDC) are leucine-zipper. The transcription repression stretch occupies residues 173–281 (DDKENERLAY…QSEELLEVSN (109 aa)). Positions 241–281 (GQTSNKRSEGVGTSSSESTHPEGPEEEENPQQSEELLEVSN) are disordered.

This sequence belongs to the E2F/DP family. Forms heterodimers with DP family members TFDP1 or TFDP2. Component of the DRTF1/E2F transcription factor complex. Part of the E2F6.com-1 complex in G0 phase composed of E2F6, MGA, MAX, TFDP1, CBX3, BAT8, EUHMTASE1, RING1, RNF2, MBLR, L3MBTL2 and YAF2. Component of some MLL1/MLL complex, at least composed of the core components KMT2A/MLL1, ASH2L, HCFC1/HCF1, WDR5 and RBBP5, as well as the facultative components BACC1, CHD8, E2F6, HSP70, INO80C, KANSL1, LAS1L, MAX, MCRS1, MGA, KAT8/MOF, PELP1, PHF20, PRP31, RING2, RUVB1/TIP49A, RUVB2/TIP49B, SENP3, TAF1, TAF4, TAF6, TAF7, TAF9 and TEX10. Expressed in all tissues examined. Highest levels in placenta, skeletal muscle, heart, ovary, kidney, small intestine and spleen.

The protein resides in the nucleus. In terms of biological role, inhibitor of E2F-dependent transcription. Binds DNA cooperatively with DP proteins through the E2 recognition site, 5'-TTTC[CG]CGC-3'. Has a preference for the 5'-TTTCCCGC-3' E2F recognition site. E2F6 lacks the transcriptional activation and pocket protein binding domains. Appears to regulate a subset of E2F-dependent genes whose products are required for entry into the cell cycle but not for normal cell cycle progression. Represses expression of some meiosis-specific genes, including SLC25A31/ANT4. May silence expression via the recruitment of a chromatin remodeling complex containing histone H3-K9 methyltransferase activity. Overexpression delays the exit of cells from the S-phase. This is Transcription factor E2F6 from Homo sapiens (Human).